We begin with the raw amino-acid sequence, 185 residues long: Ribosome-recycling factor (185 aa).

This sequence belongs to the RRF family.

It is found in the cytoplasm. In terms of biological role, responsible for the release of ribosomes from messenger RNA at the termination of protein biosynthesis. May increase the efficiency of translation by recycling ribosomes from one round of translation to another. The polypeptide is Ribosome-recycling factor (Symbiobacterium thermophilum (strain DSM 24528 / JCM 14929 / IAM 14863 / T)).